The sequence spans 341 residues: Phenylalanine--tRNA ligase alpha subunit (341 aa).

Mg(2+) is bound at residue Glu-254.

It belongs to the class-II aminoacyl-tRNA synthetase family. Phe-tRNA synthetase alpha subunit type 1 subfamily. Tetramer of two alpha and two beta subunits. The cofactor is Mg(2+).

The protein resides in the cytoplasm. It catalyses the reaction tRNA(Phe) + L-phenylalanine + ATP = L-phenylalanyl-tRNA(Phe) + AMP + diphosphate + H(+). This Mycoplasma pneumoniae (strain ATCC 29342 / M129 / Subtype 1) (Mycoplasmoides pneumoniae) protein is Phenylalanine--tRNA ligase alpha subunit (pheS).